We begin with the raw amino-acid sequence, 294 residues long: Elongation factor Ts (294 aa).

An involved in Mg(2+) ion dislocation from EF-Tu region spans residues 79-82 (TDFV).

It belongs to the EF-Ts family.

The protein localises to the cytoplasm. Associates with the EF-Tu.GDP complex and induces the exchange of GDP to GTP. It remains bound to the aminoacyl-tRNA.EF-Tu.GTP complex up to the GTP hydrolysis stage on the ribosome. The sequence is that of Elongation factor Ts from Geobacillus thermodenitrificans (strain NG80-2).